The chain runs to 550 residues: Glucose-6-phosphate isomerase (550 aa).

The active-site Proton donor is the E356. Catalysis depends on residues H387 and K515.

It belongs to the GPI family.

Its subcellular location is the cytoplasm. It catalyses the reaction alpha-D-glucose 6-phosphate = beta-D-fructose 6-phosphate. The protein operates within carbohydrate biosynthesis; gluconeogenesis. It participates in carbohydrate degradation; glycolysis; D-glyceraldehyde 3-phosphate and glycerone phosphate from D-glucose: step 2/4. In terms of biological role, catalyzes the reversible isomerization of glucose-6-phosphate to fructose-6-phosphate. This is Glucose-6-phosphate isomerase from Vibrio atlanticus (strain LGP32) (Vibrio splendidus (strain Mel32)).